Consider the following 159-residue polypeptide: Endoribonuclease YbeY (159 aa).

Zn(2+) is bound by residues histidine 123, histidine 127, and histidine 133.

This sequence belongs to the endoribonuclease YbeY family. It depends on Zn(2+) as a cofactor.

It localises to the cytoplasm. Its function is as follows. Single strand-specific metallo-endoribonuclease involved in late-stage 70S ribosome quality control and in maturation of the 3' terminus of the 16S rRNA. The protein is Endoribonuclease YbeY of Bacillus pumilus (strain SAFR-032).